The chain runs to 181 residues: MATRIRLQRHGRKSYAFYSIVIADSRAPRDGKFTEKIGTYNPNTNPATVDLNFERALHWVLVGAQPSDTVRNILSREGVYMKKHLLGGVAKGAFGEAEAEAKFEAWKNNKQSGLSALKAKEEEAKKAEAKARLEAEKKVNEVKAKALAEKKAAEEAAKAAAEAPAEEAAPAEETATEAAAE.

Residues 150 to 181 (KKAAEEAAKAAAEAPAEEAAPAEETATEAAAE) form a disordered region. Residues 158 to 181 (KAAAEAPAEEAAPAEETATEAAAE) show a composition bias toward low complexity.

This sequence belongs to the bacterial ribosomal protein bS16 family.

The sequence is that of Small ribosomal subunit protein bS16 from Bacteroides fragilis (strain YCH46).